The chain runs to 211 residues: MMSPTPEDDRDLVVVRGRLRMMDNGAEHDRERRSYTAWPHLCCGCTIGIILTMFVIATTLLLASLFAFSYMSLESGTCPKEWIGLGYSCMRVAGNNATELEALDMCAQHNSKLIDFTNAKTLVEAIVPFGSTNASFGNIFRLRDSRSTCILPTIGGPISVDCPRTCSVVCQRPRPLSTTASIIRDARIYLRLERRDYYEVYSSILSNAIMK.

Residues 1-46 (MMSPTPEDDRDLVVVRGRLRMMDNGAEHDRERRSYTAWPHLCCGCT) are Intravirion-facing. A helical; Signal-anchor for type II membrane protein transmembrane segment spans residues 47 to 67 (IGIILTMFVIATTLLLASLFA). Residues 68-211 (FSYMSLESGT…SSILSNAIMK (144 aa)) lie on the Virion surface side of the membrane. 2 N-linked (GlcNAc...) asparagine; by host glycosylation sites follow: N96 and N133.

It belongs to the herpesviridae HHV-1 UL45 family.

It localises to the virion membrane. The chain is Envelope protein UL45 homolog (UL45H) from Gallid herpesvirus 2 (strain bc-1) (GaHV-2).